The primary structure comprises 152 residues: Large ribosomal subunit protein uL15 (152 aa).

The segment at methionine 1–glycine 66 is disordered. Residues glutamate 24–asparagine 36 are compositionally biased toward gly residues.

It belongs to the universal ribosomal protein uL15 family. As to quaternary structure, part of the 50S ribosomal subunit.

Functionally, binds to the 23S rRNA. The sequence is that of Large ribosomal subunit protein uL15 from Akkermansia muciniphila (strain ATCC BAA-835 / DSM 22959 / JCM 33894 / BCRC 81048 / CCUG 64013 / CIP 107961 / Muc).